The sequence spans 301 residues: Ribosomal RNA small subunit methyltransferase H (301 aa).

S-adenosyl-L-methionine contacts are provided by residues 25–27 (GGH), aspartate 45, phenylalanine 72, aspartate 94, and glutamine 101.

It belongs to the methyltransferase superfamily. RsmH family.

Its subcellular location is the cytoplasm. It catalyses the reaction cytidine(1402) in 16S rRNA + S-adenosyl-L-methionine = N(4)-methylcytidine(1402) in 16S rRNA + S-adenosyl-L-homocysteine + H(+). Functionally, specifically methylates the N4 position of cytidine in position 1402 (C1402) of 16S rRNA. This Methylococcus capsulatus (strain ATCC 33009 / NCIMB 11132 / Bath) protein is Ribosomal RNA small subunit methyltransferase H.